A 210-amino-acid chain; its full sequence is NADH dehydrogenase [ubiquinone] iron-sulfur protein 8, mitochondrial (210 aa).

The transit peptide at M1 to A34 directs the protein to the mitochondrion. 4Fe-4S ferredoxin-type domains are found at residues R102 to E131 and T141 to N170. [4Fe-4S] cluster-binding residues include C111, C114, C117, C121, C150, C153, C156, and C160.

It belongs to the complex I 23 kDa subunit family. In terms of assembly, core subunit of respiratory chain NADH dehydrogenase (Complex I) which is composed of 45 different subunits. This is a component of the iron-sulfur (IP) fragment of the enzyme. Interacts with RAB5IF. Requires [4Fe-4S] cluster as cofactor. Expressed in all tissues with the highest level in heart and skeletal muscle and the lowest level in lung.

The protein localises to the mitochondrion inner membrane. The catalysed reaction is a ubiquinone + NADH + 5 H(+)(in) = a ubiquinol + NAD(+) + 4 H(+)(out). Its function is as follows. Core subunit of the mitochondrial membrane respiratory chain NADH dehydrogenase (Complex I) which catalyzes electron transfer from NADH through the respiratory chain, using ubiquinone as an electron acceptor. Essential for the catalytic activity and assembly of complex I. The sequence is that of NADH dehydrogenase [ubiquinone] iron-sulfur protein 8, mitochondrial (NDUFS8) from Homo sapiens (Human).